The primary structure comprises 129 residues: Replication initiation control protein YabA (129 aa).

Residues 52–71 (LSLTDEATPEPKAETEAEHG) are disordered. Residues 60–71 (PEPKAETEAEHG) are compositionally biased toward basic and acidic residues. Residues H103, C105, C119, and C122 each contribute to the Zn(2+) site.

This sequence belongs to the YabA family. As to quaternary structure, homotetramer. Interacts with both DnaA and DnaN, acting as a bridge between these two proteins. It depends on Zn(2+) as a cofactor.

It localises to the cytoplasm. It is found in the nucleoid. Functionally, involved in control of chromosome replication initiation. Inhibits the cooperative binding of DnaA to the oriC region, thus negatively regulating initiation of chromosome replication. Inhibits the ability of DnaA-ATP to form a helix on DNA; does not disassemble preformed DnaA-DNA helices. Decreases the residence time of DnaA on the chromosome at its binding sites (oriC, replication forks and promoter-binding sites). Tethers DnaA to the replication machinery via the DNA polymerase beta sliding clamp subunit (dnaN). Associates with oriC and other DnaA targets on the chromosome in a DnaA-dependent manner. In Listeria monocytogenes serotype 4a (strain HCC23), this protein is Replication initiation control protein YabA.